The primary structure comprises 129 residues: N16.2 matrix protein (129 aa).

The N-terminal stretch at Met1–Pro23 is a signal peptide. A run of 5 repeats spans residues Asn91–Gly92, Asn93–Gly94, Asp95–Gly96, Asn97–Gly98, and Asn99–Gly100. A 5 X 2 AA tandem repeats of N-G region spans residues Asn91–Gly100.

Belongs to the N16 matrix protein family. Heterooligomer; disulfide-linked. Pif97, Pif80, N16 and other proteins form a complex. Component of conchiolin, the organic matrix of nacre. Expressed at extremely high levels in the dorsal region of the mantle, which region may be responsible for the nacreous layer formation, but only in trace amounts at the mantle edge, which region may be responsible for the prismatic layer formation.

It localises to the secreted. The protein localises to the extracellular space. The protein resides in the extracellular matrix. May be specifically involved in the formation of the nacreous layer. The protein is N16.2 matrix protein of Pinctada fucata (Akoya pearl oyster).